The sequence spans 306 residues: Porphobilinogen deaminase (306 aa).

At cysteine 239 the chain carries S-(dipyrrolylmethanemethyl)cysteine.

The protein belongs to the HMBS family. Monomer. It depends on dipyrromethane as a cofactor.

The catalysed reaction is 4 porphobilinogen + H2O = hydroxymethylbilane + 4 NH4(+). The protein operates within porphyrin-containing compound metabolism; protoporphyrin-IX biosynthesis; coproporphyrinogen-III from 5-aminolevulinate: step 2/4. Its function is as follows. Tetrapolymerization of the monopyrrole PBG into the hydroxymethylbilane pre-uroporphyrinogen in several discrete steps. The sequence is that of Porphobilinogen deaminase (hemC) from Helicobacter pylori (strain ATCC 700392 / 26695) (Campylobacter pylori).